A 273-amino-acid chain; its full sequence is Ribosomal RNA small subunit methyltransferase A (273 aa).

The S-adenosyl-L-methionine site is built by Asn18, Leu20, Gly45, Glu66, Asp91, and Asn113.

Belongs to the class I-like SAM-binding methyltransferase superfamily. rRNA adenine N(6)-methyltransferase family. RsmA subfamily.

Its subcellular location is the cytoplasm. The enzyme catalyses adenosine(1518)/adenosine(1519) in 16S rRNA + 4 S-adenosyl-L-methionine = N(6)-dimethyladenosine(1518)/N(6)-dimethyladenosine(1519) in 16S rRNA + 4 S-adenosyl-L-homocysteine + 4 H(+). Specifically dimethylates two adjacent adenosines (A1518 and A1519) in the loop of a conserved hairpin near the 3'-end of 16S rRNA in the 30S particle. May play a critical role in biogenesis of 30S subunits. In Shigella boydii serotype 18 (strain CDC 3083-94 / BS512), this protein is Ribosomal RNA small subunit methyltransferase A.